Here is a 681-residue protein sequence, read N- to C-terminus: DNA-directed RNA polymerase subunit beta' (681 aa).

Zn(2+) contacts are provided by cysteine 69, cysteine 71, cysteine 87, and cysteine 90. Positions 489, 491, and 493 each coordinate Mg(2+).

This sequence belongs to the RNA polymerase beta' chain family. RpoC1 subfamily. In terms of assembly, in plastids the minimal PEP RNA polymerase catalytic core is composed of four subunits: alpha, beta, beta', and beta''. When a (nuclear-encoded) sigma factor is associated with the core the holoenzyme is formed, which can initiate transcription. It depends on Mg(2+) as a cofactor. Zn(2+) serves as cofactor.

The protein localises to the plastid. The protein resides in the chloroplast. It carries out the reaction RNA(n) + a ribonucleoside 5'-triphosphate = RNA(n+1) + diphosphate. In terms of biological role, DNA-dependent RNA polymerase catalyzes the transcription of DNA into RNA using the four ribonucleoside triphosphates as substrates. The sequence is that of DNA-directed RNA polymerase subunit beta' from Atropa belladonna (Belladonna).